A 306-amino-acid chain; its full sequence is Arginase (306 aa).

Residues H96, D123, H125, and D127 each contribute to the Mn(2+) site. Substrate-binding positions include 125-129 (HTDFH), 136-138 (SGN), and D178. Mn(2+) contacts are provided by D226 and D228. The substrate site is built by T240 and E271.

This sequence belongs to the arginase family. Mn(2+) serves as cofactor.

It catalyses the reaction L-arginine + H2O = urea + L-ornithine. Its pathway is nitrogen metabolism; urea cycle; L-ornithine and urea from L-arginine: step 1/1. The polypeptide is Arginase (arcB) (Brucella abortus biovar 1 (strain 9-941)).